A 354-amino-acid polypeptide reads, in one-letter code: Uroporphyrinogen decarboxylase (354 aa).

Residues 27–31, Phe-46, Asp-77, Tyr-154, Ser-209, and His-327 each bind substrate; that span reads RQAGR.

Belongs to the uroporphyrinogen decarboxylase family. As to quaternary structure, homodimer.

The protein resides in the cytoplasm. The catalysed reaction is uroporphyrinogen III + 4 H(+) = coproporphyrinogen III + 4 CO2. It functions in the pathway porphyrin-containing compound metabolism; protoporphyrin-IX biosynthesis; coproporphyrinogen-III from 5-aminolevulinate: step 4/4. Its function is as follows. Catalyzes the decarboxylation of four acetate groups of uroporphyrinogen-III to yield coproporphyrinogen-III. This is Uroporphyrinogen decarboxylase from Pseudomonas syringae pv. tomato (strain ATCC BAA-871 / DC3000).